Here is a 207-residue protein sequence, read N- to C-terminus: Guanylate kinase (207 aa).

The 181-residue stretch at Gly-4–Arg-184 folds into the Guanylate kinase-like domain. Ala-11–Ser-18 lines the ATP pocket.

It belongs to the guanylate kinase family.

The protein resides in the cytoplasm. It carries out the reaction GMP + ATP = GDP + ADP. Essential for recycling GMP and indirectly, cGMP. The sequence is that of Guanylate kinase from Aliivibrio fischeri (strain ATCC 700601 / ES114) (Vibrio fischeri).